The sequence spans 249 residues: Ribosomal RNA small subunit methyltransferase J (249 aa).

S-adenosyl-L-methionine contacts are provided by residues 101-102, 117-118, 153-154, and Asp171; these read RD, ER, and SS.

The protein belongs to the methyltransferase superfamily. RsmJ family.

The protein localises to the cytoplasm. The catalysed reaction is guanosine(1516) in 16S rRNA + S-adenosyl-L-methionine = N(2)-methylguanosine(1516) in 16S rRNA + S-adenosyl-L-homocysteine + H(+). Its function is as follows. Specifically methylates the guanosine in position 1516 of 16S rRNA. This Salmonella arizonae (strain ATCC BAA-731 / CDC346-86 / RSK2980) protein is Ribosomal RNA small subunit methyltransferase J.